The sequence spans 529 residues: ATP synthase subunit alpha (529 aa).

Glycine 173–threonine 180 contacts ATP.

The protein belongs to the ATPase alpha/beta chains family. F-type ATPases have 2 components, CF(1) - the catalytic core - and CF(0) - the membrane proton channel. CF(1) has five subunits: alpha(3), beta(3), gamma(1), delta(1), epsilon(1). CF(0) has three main subunits: a(1), b(2) and c(9-12). The alpha and beta chains form an alternating ring which encloses part of the gamma chain. CF(1) is attached to CF(0) by a central stalk formed by the gamma and epsilon chains, while a peripheral stalk is formed by the delta and b chains.

It localises to the cell membrane. It catalyses the reaction ATP + H2O + 4 H(+)(in) = ADP + phosphate + 5 H(+)(out). Produces ATP from ADP in the presence of a proton gradient across the membrane. The alpha chain is a regulatory subunit. The chain is ATP synthase subunit alpha from Streptomyces avermitilis (strain ATCC 31267 / DSM 46492 / JCM 5070 / NBRC 14893 / NCIMB 12804 / NRRL 8165 / MA-4680).